Here is a 123-residue protein sequence, read N- to C-terminus: Large ribosomal subunit protein bL12 (123 aa).

It belongs to the bacterial ribosomal protein bL12 family. In terms of assembly, homodimer. Part of the ribosomal stalk of the 50S ribosomal subunit. Forms a multimeric L10(L12)X complex, where L10 forms an elongated spine to which 2 to 4 L12 dimers bind in a sequential fashion. Binds GTP-bound translation factors.

Its function is as follows. Forms part of the ribosomal stalk which helps the ribosome interact with GTP-bound translation factors. Is thus essential for accurate translation. This Rhodopseudomonas palustris (strain BisB5) protein is Large ribosomal subunit protein bL12.